A 211-amino-acid polypeptide reads, in one-letter code: Outer-membrane lipoprotein carrier protein (211 aa).

The first 24 residues, 1 to 24, serve as a signal peptide directing secretion; that stretch reads MNTIKILIGLLGIFLFSLSGIVSA.

This sequence belongs to the LolA family. Monomer.

It is found in the periplasm. Participates in the translocation of lipoproteins from the inner membrane to the outer membrane. Only forms a complex with a lipoprotein if the residue after the N-terminal Cys is not an aspartate (The Asp acts as a targeting signal to indicate that the lipoprotein should stay in the inner membrane). This chain is Outer-membrane lipoprotein carrier protein, found in Coxiella burnetii (strain RSA 331 / Henzerling II).